The chain runs to 415 residues: Serine--tRNA ligase (415 aa).

231–233 (TAE) contacts L-serine. An ATP-binding site is contributed by 262 to 264 (RSE). Position 285 (glutamate 285) interacts with L-serine. An ATP-binding site is contributed by 349–352 (EISS). Serine 383 provides a ligand contact to L-serine.

The protein belongs to the class-II aminoacyl-tRNA synthetase family. Type-1 seryl-tRNA synthetase subfamily. As to quaternary structure, homodimer. The tRNA molecule binds across the dimer.

It is found in the cytoplasm. The enzyme catalyses tRNA(Ser) + L-serine + ATP = L-seryl-tRNA(Ser) + AMP + diphosphate + H(+). It catalyses the reaction tRNA(Sec) + L-serine + ATP = L-seryl-tRNA(Sec) + AMP + diphosphate + H(+). Its pathway is aminoacyl-tRNA biosynthesis; selenocysteinyl-tRNA(Sec) biosynthesis; L-seryl-tRNA(Sec) from L-serine and tRNA(Sec): step 1/1. Catalyzes the attachment of serine to tRNA(Ser). Is also able to aminoacylate tRNA(Sec) with serine, to form the misacylated tRNA L-seryl-tRNA(Sec), which will be further converted into selenocysteinyl-tRNA(Sec). The sequence is that of Serine--tRNA ligase from Helicobacter pylori (strain HPAG1).